The following is a 346-amino-acid chain: Actin-like protein 10 (346 aa).

This sequence belongs to the actin family.

This chain is Actin-like protein 10 (Actl10), found in Mus musculus (Mouse).